The sequence spans 369 residues: Putative 2-aminoethylphosphonate import ATP-binding protein PhnT (369 aa).

Residues 19–250 (IVLDSLRVAY…PPNRFAAEFL (232 aa)) enclose the ABC transporter domain. Residue 51-58 (GPSGSGKT) coordinates ATP.

It belongs to the ABC transporter superfamily. 2-aminoethylphosphonate importer (TC 3.A.1.11.5) family.

The protein resides in the cell inner membrane. Probably part of the PhnSTUV complex (TC 3.A.1.11.5) involved in 2-aminoethylphosphonate import. Probably responsible for energy coupling to the transport system. The polypeptide is Putative 2-aminoethylphosphonate import ATP-binding protein PhnT (phnT) (Salmonella typhimurium (strain LT2 / SGSC1412 / ATCC 700720)).